The primary structure comprises 353 residues: S-adenosylmethionine:tRNA ribosyltransferase-isomerase (353 aa).

The protein belongs to the QueA family. Monomer.

The protein resides in the cytoplasm. The enzyme catalyses 7-aminomethyl-7-carbaguanosine(34) in tRNA + S-adenosyl-L-methionine = epoxyqueuosine(34) in tRNA + adenine + L-methionine + 2 H(+). The protein operates within tRNA modification; tRNA-queuosine biosynthesis. Functionally, transfers and isomerizes the ribose moiety from AdoMet to the 7-aminomethyl group of 7-deazaguanine (preQ1-tRNA) to give epoxyqueuosine (oQ-tRNA). The protein is S-adenosylmethionine:tRNA ribosyltransferase-isomerase of Baumannia cicadellinicola subsp. Homalodisca coagulata.